Reading from the N-terminus, the 220-residue chain is MEFLFGRRKTPEEMLRQNQRALNKAMREMDRERQKLEQQEKKIIADIKKMAKQGQMDAVKIMAKDLVRTRRYVKKFIMMRANIQAVSLKIQTLKSNNSMAQAMKGVTKAMATMNRQLKLPQIQKIMMEFEKQSEIMDMKEEMMNDAIDDAMGDEDDEEESDAVVSQVLDELGLTLTDELSNLPSTGGSLSVAGAKKGEPSAALADADADLEERLNNLRRD.

2 coiled-coil regions span residues 12–53 (EEML…MAKQ) and 199–220 (PSAA…LRRD). Residues 179-208 (LSNLPSTGGSLSVAGAKKGEPSAALADADA) are disordered. The MIT-interacting motif motif lies at 208–218 (ADLEERLNNLR).

Belongs to the SNF7 family. As to quaternary structure, probable core component of the endosomal sorting required for transport complex III (ESCRT-III). ESCRT-III components are thought to multimerize to form a flat lattice on the perimeter membrane of the endosome.

It localises to the late endosome membrane. Its subcellular location is the cytoplasm. Its function is as follows. Probable core component of the endosomal sorting required for transport complex III (ESCRT-III) which is involved in multivesicular bodies (MVBs) formation and sorting of endosomal cargo proteins into MVBs. MVBs contain intraluminal vesicles (ILVs) that are generated by invagination and scission from the limiting membrane of the endosome and mostly are delivered to lysosomes enabling degradation of membrane proteins, such as stimulated growth factor receptors, lysosomal enzymes and lipids. This chain is Charged multivesicular body protein 2a (chmp2a), found in Xenopus tropicalis (Western clawed frog).